The sequence spans 117 residues: Acylphosphatase (117 aa).

Positions 21–107 (RWRFRIRGLV…TGADWFEIRP (87 aa)) constitute an Acylphosphatase-like domain. Catalysis depends on residues Arg36 and Asn54.

Belongs to the acylphosphatase family.

The enzyme catalyses an acyl phosphate + H2O = a carboxylate + phosphate + H(+). This chain is Acylphosphatase (acyP), found in Synechococcus sp. (strain RCC307).